Reading from the N-terminus, the 353-residue chain is Probable peptidoglycan glycosyltransferase FtsW (353 aa).

The next 8 helical transmembrane spans lie at 26 to 46, 53 to 73, 115 to 135, 137 to 157, 162 to 182, 242 to 262, 288 to 308, and 314 to 334; these read IFYF…PMSF, LILI…KSVH, FWGF…LLAE, DLGT…LSGV, FFII…FEPY, IIGE…IFFI, IGLW…GILP, and LPLI…ICIL.

The protein belongs to the SEDS family. FtsW subfamily.

Its subcellular location is the cell inner membrane. It carries out the reaction [GlcNAc-(1-&gt;4)-Mur2Ac(oyl-L-Ala-gamma-D-Glu-L-Lys-D-Ala-D-Ala)](n)-di-trans,octa-cis-undecaprenyl diphosphate + beta-D-GlcNAc-(1-&gt;4)-Mur2Ac(oyl-L-Ala-gamma-D-Glu-L-Lys-D-Ala-D-Ala)-di-trans,octa-cis-undecaprenyl diphosphate = [GlcNAc-(1-&gt;4)-Mur2Ac(oyl-L-Ala-gamma-D-Glu-L-Lys-D-Ala-D-Ala)](n+1)-di-trans,octa-cis-undecaprenyl diphosphate + di-trans,octa-cis-undecaprenyl diphosphate + H(+). The protein operates within cell wall biogenesis; peptidoglycan biosynthesis. Its function is as follows. Peptidoglycan polymerase that is essential for cell division. This chain is Probable peptidoglycan glycosyltransferase FtsW, found in Buchnera aphidicola subsp. Schizaphis graminum (strain Sg).